The sequence spans 34 residues: Crassicorin-II (34 aa).

C6 and C30 form a disulfide bridge.

Highly expressed by the mesenteries. Moderately expressed by the pharynx. Weakly expressed by the gonad and pedal disk. No expression in tentacle.

The protein resides in the secreted. The protein localises to the nematocyst. In terms of biological role, peptide with both antimicrobial and neurotoxin activities. Cationic AMP with antimicrobial activity against both Gram-positive bacteria (B.subtilis) and Gram-negative bacteria (E.coli and S.enterica). Shows no significant antimicrobial activity against bacteria S.aureus and P.aeruginosa, as well as the fungus C.albicans. In vivo, induces reversible paralytic activity towards the shrimp P.paucidens. May act by impairing sodium or potassium channels in the prey. The polypeptide is Crassicorin-II (Urticina crassicornis (Mottled anemone)).